The primary structure comprises 342 residues: MITPQEALQRTIEHREIFHDEMLHLMRLIMRGDMSPVMAAAIITGLRVKKETIGEITAAATVMREFARHVDVQDNSNFVDIVGTGGDGSHTFNISTATMFVSAAAGAKVAKHGNRGVSSKSGSADVLEALGVNIDLQPEQVAASITETGMGFMFAPNHHPAMKNIAPVRRELGVRTIFNILGPLTNPAGAPNQLQGVFHPDLVGIQVRVMQRLGARHVLVVYGRDGMDEVSLGAATLVGELRNGEITEYEIHPEDFGMQMVSNRTLKVADAAESKVLLLEALDNKPGVAREIVTLNAGTALYSANVAESIADGIRLAREAIASGKARAKVDELVRFTQQFKH.

5-phospho-alpha-D-ribose 1-diphosphate is bound by residues Gly-83, 86-87 (GD), Thr-91, 93-96 (NIST), 111-119 (KHGNRGVSS), and Ser-123. Gly-83 contacts anthranilate. A Mg(2+)-binding site is contributed by Ser-95. Asn-114 is a binding site for anthranilate. Residue Arg-169 coordinates anthranilate. Mg(2+) is bound by residues Asp-228 and Glu-229.

This sequence belongs to the anthranilate phosphoribosyltransferase family. In terms of assembly, homodimer. Mg(2+) is required as a cofactor.

It catalyses the reaction N-(5-phospho-beta-D-ribosyl)anthranilate + diphosphate = 5-phospho-alpha-D-ribose 1-diphosphate + anthranilate. The protein operates within amino-acid biosynthesis; L-tryptophan biosynthesis; L-tryptophan from chorismate: step 2/5. Catalyzes the transfer of the phosphoribosyl group of 5-phosphorylribose-1-pyrophosphate (PRPP) to anthranilate to yield N-(5'-phosphoribosyl)-anthranilate (PRA). The polypeptide is Anthranilate phosphoribosyltransferase (Paraburkholderia phymatum (strain DSM 17167 / CIP 108236 / LMG 21445 / STM815) (Burkholderia phymatum)).